Consider the following 329-residue polypeptide: Putative glycosyltransferase CsbB (329 aa).

Transmembrane regions (helical) follow at residues 231–251 and 264–284; these read CFYT…ATFV and FTII…LGII.

It belongs to the glycosyltransferase 2 family. GtrB subfamily.

The protein resides in the cell membrane. This chain is Putative glycosyltransferase CsbB (csbB), found in Bacillus subtilis (strain 168).